The chain runs to 700 residues: Polyribonucleotide nucleotidyltransferase (700 aa).

The Mg(2+) site is built by Asp491 and Asp497. A KH domain is found at 558-617 (PNYAVIEINPDKIRDVIGKGGATIRQLTEETGAVIDIDDAGTIRIFGENKAATKAAIAKI). One can recognise an S1 motif domain in the interval 627 to 695 (GKTYEGTVAR…NRGRIKLTMK (69 aa)).

It belongs to the polyribonucleotide nucleotidyltransferase family. In terms of assembly, component of the RNA degradosome, which is a multiprotein complex involved in RNA processing and mRNA degradation. It depends on Mg(2+) as a cofactor.

Its subcellular location is the cytoplasm. The catalysed reaction is RNA(n+1) + phosphate = RNA(n) + a ribonucleoside 5'-diphosphate. In terms of biological role, involved in mRNA degradation. Catalyzes the phosphorolysis of single-stranded polyribonucleotides processively in the 3'- to 5'-direction. This Psychrobacter cryohalolentis (strain ATCC BAA-1226 / DSM 17306 / VKM B-2378 / K5) protein is Polyribonucleotide nucleotidyltransferase.